A 202-amino-acid polypeptide reads, in one-letter code: LexA repressor 1 (202 aa).

A DNA-binding region (H-T-H motif) is located at residues 28–48; sequence RAEIAQELGFKSPNAAEEHLK. Active-site for autocatalytic cleavage activity residues include S123 and K160.

Belongs to the peptidase S24 family. Homodimer.

It carries out the reaction Hydrolysis of Ala-|-Gly bond in repressor LexA.. Functionally, represses a number of genes involved in the response to DNA damage (SOS response), including recA and lexA. In the presence of single-stranded DNA, RecA interacts with LexA causing an autocatalytic cleavage which disrupts the DNA-binding part of LexA, leading to derepression of the SOS regulon and eventually DNA repair. The polypeptide is LexA repressor 1 (Pseudomonas syringae pv. tomato (strain ATCC BAA-871 / DC3000)).